Consider the following 347-residue polypeptide: D-fructose 1,6-bisphosphatase class 2/sedoheptulose 1,7-bisphosphatase (347 aa).

D33, E57, D97, and E100 together coordinate Mn(2+). Residues 100–102 (EGT), Y131, 176–178 (RDR), and 198–200 (DGD) each bind substrate. A Mn(2+)-binding site is contributed by E225.

Belongs to the FBPase class 2 family. Homotetramer. Mn(2+) serves as cofactor.

The enzyme catalyses beta-D-fructose 1,6-bisphosphate + H2O = beta-D-fructose 6-phosphate + phosphate. It carries out the reaction D-sedoheptulose 1,7-bisphosphate + H2O = D-sedoheptulose 7-phosphate + phosphate. It functions in the pathway carbohydrate biosynthesis; Calvin cycle. Its function is as follows. Catalyzes the hydrolysis of fructose 1,6-bisphosphate (Fru 1,6-P2) and sedoheptulose 1,7-bisphosphate (Sed 1,7-P2) to fructose 6-phosphate and sedoheptulose 7-phosphate, respectively. This is D-fructose 1,6-bisphosphatase class 2/sedoheptulose 1,7-bisphosphatase from Thermosynechococcus vestitus (strain NIES-2133 / IAM M-273 / BP-1).